The sequence spans 218 residues: MVTVKLYGMAYSTCTKRVYTTAKEIGVDVKIVPVDLMKGEHKEPAYLDNYHPFGVIPVLEDEDGTKIYESRAISRYLVAKYGKGSSLLPSPSDPKAYGLFEQAASVEYSSFDPPASSLAYERVFAGMRGLKTNEELAKKYVDTLNAKMDGYERILSKQKYLAGNDFTLADLFHLPYGAMVAQLEPTVLDSKPHVKAWWAASLRVIPGRLLRNSSKEFM.

The region spanning valine 2 to serine 85 is the GST N-terminal domain. Residues serine 12 to threonine 13, histidine 41 to lysine 42, valine 55 to isoleucine 56, and glutamate 69 to serine 70 each bind glutathione. The 126-residue stretch at aspartate 93–methionine 218 folds into the GST C-terminal domain.

The protein belongs to the GST superfamily. Phi family. In terms of tissue distribution, expressed in vegetative rosettes.

Its subcellular location is the cytoplasm. The protein localises to the cytosol. The catalysed reaction is RX + glutathione = an S-substituted glutathione + a halide anion + H(+). Its function is as follows. Specifically catalyzes the conjugation of synthetic 1-chloro-2,4-ditrobenzene to GSH. Also functions as a glutathione peroxidase, converting linoleate oxidation products into their corresponding hydroxyacids. This enzyme may thus serve to protect the cell from oxygen toxicity as well as from exogenous toxins such as herbicides. In Arabidopsis thaliana (Mouse-ear cress), this protein is Glutathione S-transferase PM239X14.